We begin with the raw amino-acid sequence, 434 residues long: 3-ketoacyl-CoA thiolase A, peroxisomal (434 aa).

Residues 1–36 (MSESVGRTSAMHRLQVVLGHLAGRPESSSALQAAPC) constitute a peroxisome transit peptide. A PTS2-type peroxisomal targeting signal region spans residues 11-36 (MHRLQVVLGHLAGRPESSSALQAAPC). Cys133 (acyl-thioester intermediate) is an active-site residue. N6-acetyllysine is present on residues Lys183 and Lys244. Catalysis depends on proton acceptor residues His387 and Cys418.

It belongs to the thiolase-like superfamily. Thiolase family. In terms of assembly, homodimer. Interacts (via PTS2-type peroxisomal targeting signal region) with PEX7; leading to its translocation into peroxisomes.

It localises to the peroxisome. The catalysed reaction is an acyl-CoA + acetyl-CoA = a 3-oxoacyl-CoA + CoA. It catalyses the reaction 2 acetyl-CoA = acetoacetyl-CoA + CoA. The enzyme catalyses tetradecanoyl-CoA + acetyl-CoA = 3-oxohexadecanoyl-CoA + CoA. It carries out the reaction hexanoyl-CoA + acetyl-CoA = 3-oxooctanoyl-CoA + CoA. The catalysed reaction is 3-oxohexadecanedioyl-CoA + CoA = tetradecanedioyl-CoA + acetyl-CoA. It catalyses the reaction 3-oxo-(6Z,9Z,12Z,15Z,18Z,21Z)-tetracosahexaenoyl-CoA + CoA = (4Z,7Z,10Z,13Z,16Z,19Z)-docosahexaenoyl-CoA + acetyl-CoA. It participates in lipid metabolism; peroxisomal fatty acid beta-oxidation. Responsible for the thiolytic cleavage of straight chain 3-keto fatty acyl-CoAs (3-oxoacyl-CoAs). Plays an important role in fatty acid peroxisomal beta-oxidation. Catalyzes the cleavage of short, medium, long, and very long straight chain 3-oxoacyl-CoAs. Medium chain straight 3-oxoacyl-CoAs are preferred substrates. In Rattus norvegicus (Rat), this protein is 3-ketoacyl-CoA thiolase A, peroxisomal.